Consider the following 105-residue polypeptide: Dynein axonemal light chain 4 (105 aa).

Belongs to the dynein light chain family. Consists of at least two heavy chains and a number of intermediate and light chains.

The protein resides in the cytoplasm. Its subcellular location is the cytoskeleton. The protein localises to the cilium axoneme. Its function is as follows. Force generating protein of respiratory cilia. Produces force towards the minus ends of microtubules. Dynein has ATPase activity. This chain is Dynein axonemal light chain 4 (DNAL4), found in Bos taurus (Bovine).